The chain runs to 255 residues: MGKTSVLLTNDDGVQAKGILYLAEYLKENGFDVVVVAPEKERSAISHAITLHKPLRLKPVREEENLRIYAINGTPSDCVKMGIEVVMEKNPDIIISGINNGLNMGTDILYSGTVSAAIEGALYGIPALAVSLEEDGDFEEQRMYIFLKKLIEKVLEEGLPKNTLLNVNIPDFRKGINGIRITILGKRIYTETFQKNYDPRGKEYYWMAGKISEIDNDERTDIVSVKKGYISITPIHFDLTDYEAVKKLSSWKIDI.

Residues D11, D12, S43, and N99 each contribute to the a divalent metal cation site.

The protein belongs to the SurE nucleotidase family. A divalent metal cation serves as cofactor.

The protein localises to the cytoplasm. It catalyses the reaction a ribonucleoside 5'-phosphate + H2O = a ribonucleoside + phosphate. Nucleotidase that shows phosphatase activity on nucleoside 5'-monophosphates. This Caldanaerobacter subterraneus subsp. tengcongensis (strain DSM 15242 / JCM 11007 / NBRC 100824 / MB4) (Thermoanaerobacter tengcongensis) protein is 5'-nucleotidase SurE.